The sequence spans 219 residues: ATP-dependent Clp protease proteolytic subunit 3 (219 aa).

The Nucleophile role is filled by Ser112. His137 is an active-site residue.

This sequence belongs to the peptidase S14 family. Fourteen ClpP subunits assemble into 2 heptameric rings which stack back to back to give a disk-like structure with a central cavity, resembling the structure of eukaryotic proteasomes.

Its subcellular location is the cytoplasm. The enzyme catalyses Hydrolysis of proteins to small peptides in the presence of ATP and magnesium. alpha-casein is the usual test substrate. In the absence of ATP, only oligopeptides shorter than five residues are hydrolyzed (such as succinyl-Leu-Tyr-|-NHMec, and Leu-Tyr-Leu-|-Tyr-Trp, in which cleavage of the -Tyr-|-Leu- and -Tyr-|-Trp bonds also occurs).. Its function is as follows. Cleaves peptides in various proteins in a process that requires ATP hydrolysis. Has a chymotrypsin-like activity. Plays a major role in the degradation of misfolded proteins. The sequence is that of ATP-dependent Clp protease proteolytic subunit 3 from Streptomyces avermitilis (strain ATCC 31267 / DSM 46492 / JCM 5070 / NBRC 14893 / NCIMB 12804 / NRRL 8165 / MA-4680).